A 462-amino-acid chain; its full sequence is L-seryl-tRNA(Sec) selenium transferase (462 aa).

Lys-292 bears the N6-(pyridoxal phosphate)lysine mark.

This sequence belongs to the SelA family. Pyridoxal 5'-phosphate is required as a cofactor.

The protein localises to the cytoplasm. The catalysed reaction is L-seryl-tRNA(Sec) + selenophosphate + H(+) = L-selenocysteinyl-tRNA(Sec) + phosphate. The protein operates within aminoacyl-tRNA biosynthesis; selenocysteinyl-tRNA(Sec) biosynthesis; selenocysteinyl-tRNA(Sec) from L-seryl-tRNA(Sec) (bacterial route): step 1/1. Its function is as follows. Converts seryl-tRNA(Sec) to selenocysteinyl-tRNA(Sec) required for selenoprotein biosynthesis. This Geobacter metallireducens (strain ATCC 53774 / DSM 7210 / GS-15) protein is L-seryl-tRNA(Sec) selenium transferase.